We begin with the raw amino-acid sequence, 209 residues long: Ribosomal RNA large subunit methyltransferase E (209 aa).

Residues G63, W65, D83, D99, and D124 each coordinate S-adenosyl-L-methionine. The active-site Proton acceptor is K164.

This sequence belongs to the class I-like SAM-binding methyltransferase superfamily. RNA methyltransferase RlmE family.

It is found in the cytoplasm. The catalysed reaction is uridine(2552) in 23S rRNA + S-adenosyl-L-methionine = 2'-O-methyluridine(2552) in 23S rRNA + S-adenosyl-L-homocysteine + H(+). Its function is as follows. Specifically methylates the uridine in position 2552 of 23S rRNA at the 2'-O position of the ribose in the fully assembled 50S ribosomal subunit. This chain is Ribosomal RNA large subunit methyltransferase E, found in Baumannia cicadellinicola subsp. Homalodisca coagulata.